The primary structure comprises 113 residues: Large ribosomal subunit protein bL17 (113 aa).

This sequence belongs to the bacterial ribosomal protein bL17 family. Part of the 50S ribosomal subunit. Contacts protein L32.

The chain is Large ribosomal subunit protein bL17 from Alkaliphilus metalliredigens (strain QYMF).